Reading from the N-terminus, the 316-residue chain is HPr kinase/phosphorylase (316 aa).

Residues histidine 146 and lysine 167 contribute to the active site. 161–168 is an ATP binding site; it reads GESGLGKS. Serine 168 lines the Mg(2+) pocket. Residue aspartate 185 is the Proton acceptor; for phosphorylation activity. Proton donor; for dephosphorylation activity of the active site. The interval 209-218 is important for the catalytic mechanism of both phosphorylation and dephosphorylation; the sequence is LEVRGIGLLD. Glutamate 210 is a binding site for Mg(2+). Arginine 252 is an active-site residue. The interval 273–278 is important for the catalytic mechanism of dephosphorylation; it reads QVEAGR.

The protein belongs to the HPrK/P family. In terms of assembly, homohexamer. The cofactor is Mg(2+).

The enzyme catalyses [HPr protein]-L-serine + ATP = [HPr protein]-O-phospho-L-serine + ADP + H(+). The catalysed reaction is [HPr protein]-O-phospho-L-serine + phosphate + H(+) = [HPr protein]-L-serine + diphosphate. Its function is as follows. Catalyzes the ATP- as well as the pyrophosphate-dependent phosphorylation of a specific serine residue in HPr, a phosphocarrier protein of the phosphoenolpyruvate-dependent sugar phosphotransferase system (PTS). HprK/P also catalyzes the pyrophosphate-producing, inorganic phosphate-dependent dephosphorylation (phosphorolysis) of seryl-phosphorylated HPr (P-Ser-HPr). The sequence is that of HPr kinase/phosphorylase from Polaromonas sp. (strain JS666 / ATCC BAA-500).